A 207-amino-acid chain; its full sequence is Protein 6b (207 aa).

Residues 160-183 are disordered; sequence GNYTEEGEDDDDEMDDEGEAGGAE. Over residues 164–178 the composition is skewed to acidic residues; the sequence is EEGEDDDDEMDDEGE.

In terms of biological role, involved in tumor formation and increases auxin and cytokinin effects in host plants. The polypeptide is Protein 6b (6b) (Agrobacterium tumefaciens (strain Ach5)).